Here is an 89-residue protein sequence, read N- to C-terminus: UPF0335 protein Caul_0876 (89 aa).

It belongs to the UPF0335 family.

The sequence is that of UPF0335 protein Caul_0876 from Caulobacter sp. (strain K31).